Reading from the N-terminus, the 88-residue chain is Small ribosomal subunit protein bS20 (88 aa).

The disordered stretch occupies residues 1 to 33 (MANTSSAKKATRKIARRTAVNKSRRTQMRGSVR).

This sequence belongs to the bacterial ribosomal protein bS20 family.

In terms of biological role, binds directly to 16S ribosomal RNA. This chain is Small ribosomal subunit protein bS20, found in Rhodopseudomonas palustris (strain BisB5).